The sequence spans 89 residues: Small ribosomal subunit protein uS14 (89 aa).

Belongs to the universal ribosomal protein uS14 family. Part of the 30S ribosomal subunit. Contacts proteins S3 and S10.

In terms of biological role, binds 16S rRNA, required for the assembly of 30S particles and may also be responsible for determining the conformation of the 16S rRNA at the A site. This chain is Small ribosomal subunit protein uS14, found in Latilactobacillus sakei subsp. sakei (strain 23K) (Lactobacillus sakei subsp. sakei).